A 1291-amino-acid chain; its full sequence is DNA-directed RNA polymerase subunit beta' (1291 aa).

Residues cysteine 60, cysteine 62, cysteine 75, and cysteine 78 each coordinate Zn(2+). The Mg(2+) site is built by aspartate 535, aspartate 537, and aspartate 539. Zn(2+) contacts are provided by cysteine 874, cysteine 951, cysteine 958, and cysteine 961.

It belongs to the RNA polymerase beta' chain family. As to quaternary structure, the RNAP catalytic core consists of 2 alpha, 1 beta, 1 beta' and 1 omega subunit. When a sigma factor is associated with the core the holoenzyme is formed, which can initiate transcription. Mg(2+) is required as a cofactor. The cofactor is Zn(2+).

The catalysed reaction is RNA(n) + a ribonucleoside 5'-triphosphate = RNA(n+1) + diphosphate. Its function is as follows. DNA-dependent RNA polymerase catalyzes the transcription of DNA into RNA using the four ribonucleoside triphosphates as substrates. In Leifsonia xyli subsp. xyli (strain CTCB07), this protein is DNA-directed RNA polymerase subunit beta'.